We begin with the raw amino-acid sequence, 611 residues long: Virulence metalloprotease (611 aa).

The first 25 residues, 1–25, serve as a signal peptide directing secretion; sequence MKKVQRQMKWLFLAASISAALPVSA. A propeptide spanning residues 26-199 is cleaved from the precursor; it reads AKMVQVDDPS…VLQTWEGLNH (174 aa). Position 346 (His-346) interacts with Zn(2+). Glu-347 is an active-site residue. Zn(2+) is bound by residues His-350 and Glu-370. Catalysis depends on His-429, which acts as the Proton donor.

It belongs to the peptidase M4 family. Ca(2+) serves as cofactor. Zn(2+) is required as a cofactor. In terms of processing, seems to be more extensively processed.

It is found in the secreted. Its function is as follows. Extracellular zinc metalloprotease involved in the virulence mechanism of V.anguillarum. This chain is Virulence metalloprotease (empA), found in Vibrio anguillarum (Listonella anguillarum).